We begin with the raw amino-acid sequence, 1939 residues long: Myosin-1 (1939 aa).

In terms of domain architecture, Myosin N-terminal SH3-like spans 33–82 (DAKTSVFVVDPKESFVKATVQSREGGKVTAKTEAGATVTVKDDQVFPMNP). Phosphothreonine occurs at positions 64 and 69. Residues 86–782 (DKIEDMAMMT…LLGLLEEMRD (697 aa)) form the Myosin motor domain. Position 130 is an N6,N6,N6-trimethyllysine (K130). 179 to 186 (GESGAGKT) provides a ligand contact to ATP. A Phosphotyrosine modification is found at Y389. T419 carries the phosphothreonine modification. Y424 bears the Phosphotyrosine mark. Residues 659–681 (LNKLMTNLRSTHPHFVRCIIPNE) are actin-binding. Residue H757 is modified to Pros-methylhistidine. The interval 761–775 (KFGHTKVFFKAGLLG) is actin-binding. One can recognise an IQ domain in the interval 785–814 (LAQLITRTQAMCRGFLARVEYQKMVERRES). A coiled-coil region spans residues 843-1939 (LLKSAETEKE…EVHTKIISEE (1097 aa)). Phosphoserine is present on residues S1092, S1096, S1162, and S1237. T1241 is modified (phosphothreonine). Phosphoserine is present on residues S1243 and S1261. Phosphothreonine occurs at positions 1265 and 1286. Phosphoserine occurs at positions 1288, 1292, 1303, and 1306. A Phosphothreonine modification is found at T1467. A Phosphoserine modification is found at S1474. Phosphotyrosine is present on Y1492. A Phosphoserine modification is found at S1495. Residue T1501 is modified to Phosphothreonine. At S1514 the chain carries Phosphoserine. Residue T1517 is modified to Phosphothreonine. Phosphoserine occurs at positions 1542, 1554, 1574, 1600, 1603, 1714, and 1726. T1730 and T1736 each carry phosphothreonine. S1739 is subject to Phosphoserine.

It belongs to the TRAFAC class myosin-kinesin ATPase superfamily. Myosin family. Muscle myosin is a hexameric protein that consists of 2 heavy chain subunits (MHC), 2 alkali light chain subunits (MLC) and 2 regulatory light chain subunits (MLC-2). Interacts with SLC26A5.

It is found in the cytoplasm. The protein resides in the myofibril. Required for normal hearing. It plays a role in cochlear amplification of auditory stimuli, likely through the positive regulation of prestin (SLC26A5) activity and outer hair cell (OHC) electromotility. The protein is Myosin-1 of Homo sapiens (Human).